The chain runs to 594 residues: Zinc finger protein 467 (594 aa).

Positions 1–86 (MRETLEALNS…PQKAEPAGSV (86 aa)) are disordered. An interaction with STAT3 region spans residues 1–183 (MRETLEALNS…TLRLHQRLHR (183 aa)). The span at 31–47 (SNAQEKMSSRGESTLHS) shows a compositional bias: polar residues. Residues 54-64 (PGQKEGIHTEQ) show a composition bias toward basic and acidic residues. K97 participates in a covalent cross-link: Glycyl lysine isopeptide (Lys-Gly) (interchain with G-Cter in SUMO2). C2H2-type zinc fingers lie at residues 160 to 182 (YGCE…QRLH), 188 to 210 (CACP…QRSH), 216 to 238 (FPCS…LRTH), 244 to 266 (YPCA…QKTH), 272 to 294 (FPCT…QRIH), 300 to 322 (YQCT…QRVH), 355 to 377 (FACS…QSLH), 430 to 452 (FFCP…RRVH), 458 to 480 (FACA…SRAH), 486 to 508 (FACA…QAVH), 514 to 536 (HACA…QAIH), and 542 to 564 (FSCP…QRIH). The disordered stretch occupies residues 313 to 351 (QHLVRHQRVHDAASRTRSSPDIPVAPHSPTASLTPSPPG). Residue K368 forms a Glycyl lysine isopeptide (Lys-Gly) (interchain with G-Cter in SUMO2) linkage.

It belongs to the krueppel C2H2-type zinc-finger protein family. In terms of assembly, interacts with STAT3. Enhances STAT3 activity by keeping it in the nucleus.

Its subcellular location is the nucleus. Functionally, transcription factor that promotes adipocyte differentiation and suppresses osteoblast differentiation in the bone marrow. Enhances the osteoclast-supporting ability of stromal cells. Binds with STAT3 the consensus sequence 5'-CTTCTGGGAAGA-3' of the acute phase response element (APRE). Transactivates several promoters including FOS, OSM and PPARG. Recruits a histone deacetylase complex. This chain is Zinc finger protein 467 (Znf467), found in Mus musculus (Mouse).